The following is a 466-amino-acid chain: Ribosome biogenesis protein YTM1 (466 aa).

The segment at 11–99 (IKIKFFTNEE…EAFLTLEYTR (89 aa)) is ubiquitin-like (UBL) domain. Residues 109 to 466 (SFNNDDWISS…QINKGSDIAK (358 aa)) are sufficient for interaction with ERB1 and association with 66S pre-ribosomes. WD repeat units lie at residues 124 to 163 (PTTK…EKQY), 165 to 203 (GHSA…IIDE), 219 to 258 (GHKA…MTSI), 296 to 336 (GHSE…CVDT), 338 to 377 (TTGY…TSDQ), 384 to 424 (GHTN…SLYT), and 431 to 466 (STNA…DIAK).

This sequence belongs to the WD repeat WDR12/YTM1 family. In terms of assembly, component of the NOP7 complex, composed of ERB1, NOP7 and YTM1. The complex is held together by ERB1, which interacts with NOP7 via its N-terminal domain and with YTM1 via a high-affinity interaction between the seven-bladed beta-propeller domains of the 2 proteins. The NOP7 complex associates with the 66S pre-ribosome. Interacts (via UBL domain) with MDN1 (via VWFA/MIDAS domain).

The protein resides in the nucleus. It is found in the nucleolus. Its subcellular location is the nucleoplasm. Its function is as follows. Component of the NOP7 complex, which is required for maturation of the 25S and 5.8S ribosomal RNAs and formation of the 60S ribosome. The polypeptide is Ribosome biogenesis protein YTM1 (Candida albicans (strain SC5314 / ATCC MYA-2876) (Yeast)).